The following is a 102-amino-acid chain: Anti-lipopolysaccharide factor (102 aa).

The cysteines at positions 32 and 53 are disulfide-linked.

Its function is as follows. Binds tightly to LPS and thus specifically inhibits the LPS-mediated activation of the hemolymph coagulation. It has a strong antibacterial effect especially on the growth of Gram-negative bacteria. This chain is Anti-lipopolysaccharide factor, found in Tachypleus tridentatus (Japanese horseshoe crab).